The chain runs to 211 residues: Endonuclease YncB (211 aa).

A signal peptide spans 1–19; it reads MKKILISMIAIVLSITLAA. Cys-20 carries the N-palmitoyl cysteine lipid modification. The S-diacylglycerol cysteine moiety is linked to residue Cys-20. The disordered stretch occupies residues 24–63; that stretch reads HAAKNHSDSNGTEQVSQDTHSNEYNQTEQKAGTPHSKNQK. Positions 31–53 are enriched in polar residues; it reads DSNGTEQVSQDTHSNEYNQTEQK. The 134-residue stretch at 64-197 folds into the TNase-like domain; the sequence is KLVNVTLDRA…KSDKLSIWSK (134 aa). Ca(2+) is bound at residue Asp-77. Arg-91 is an active-site residue. Ca(2+) is bound by residues Asp-96 and Thr-97. Residues Glu-99 and Arg-142 contribute to the active site.

The protein belongs to the thermonuclease family. Ca(2+) is required as a cofactor.

The protein localises to the cell membrane. Inhibited by aurintricalboxylic acid but not by Zn(2+). Its function is as follows. Shows DNase activity on double strand DNA. The protein is Endonuclease YncB (yncB) of Bacillus subtilis (strain 168).